Reading from the N-terminus, the 206-residue chain is Large ribosomal subunit protein uL4 (206 aa).

The interval 46 to 89 (GNRAQKTRAEVKHSTKKPWRQKGTGRARSGMTSSPLWRKGGRAF) is disordered. The span at 59 to 70 (STKKPWRQKGTG) shows a compositional bias: basic residues.

It belongs to the universal ribosomal protein uL4 family. In terms of assembly, part of the 50S ribosomal subunit.

In terms of biological role, one of the primary rRNA binding proteins, this protein initially binds near the 5'-end of the 23S rRNA. It is important during the early stages of 50S assembly. It makes multiple contacts with different domains of the 23S rRNA in the assembled 50S subunit and ribosome. Forms part of the polypeptide exit tunnel. The polypeptide is Large ribosomal subunit protein uL4 (Neisseria gonorrhoeae (strain NCCP11945)).